Consider the following 54-residue polypeptide: MPQLDFTWWIINFFIIWTAILLTLVILVNNKTAQNLTTTDSLQIEKNSTNWQWL.

The chain crosses the membrane as a helical span at residues 8 to 28 (WWIINFFIIWTAILLTLVILV).

It belongs to the ATPase protein 8 family. As to quaternary structure, F-type ATPases have 2 components, CF(1) - the catalytic core - and CF(0) - the membrane proton channel.

It localises to the mitochondrion membrane. In terms of biological role, mitochondrial membrane ATP synthase (F(1)F(0) ATP synthase or Complex V) produces ATP from ADP in the presence of a proton gradient across the membrane which is generated by electron transport complexes of the respiratory chain. F-type ATPases consist of two structural domains, F(1) - containing the extramembraneous catalytic core and F(0) - containing the membrane proton channel, linked together by a central stalk and a peripheral stalk. During catalysis, ATP synthesis in the catalytic domain of F(1) is coupled via a rotary mechanism of the central stalk subunits to proton translocation. Part of the complex F(0) domain. Minor subunit located with subunit a in the membrane. The protein is ATP synthase protein 8 (MT-ATP8) of Paracentrotus lividus (Common sea urchin).